We begin with the raw amino-acid sequence, 375 residues long: UDP-N-acetylglucosamine--N-acetylmuramyl-(pentapeptide) pyrophosphoryl-undecaprenol N-acetylglucosamine transferase (375 aa).

Residues 13-15 (TGG), Asn124, Arg165, Ser193, and Gln294 each bind UDP-N-acetyl-alpha-D-glucosamine.

Belongs to the glycosyltransferase 28 family. MurG subfamily.

Its subcellular location is the cell inner membrane. It carries out the reaction di-trans,octa-cis-undecaprenyl diphospho-N-acetyl-alpha-D-muramoyl-L-alanyl-D-glutamyl-meso-2,6-diaminopimeloyl-D-alanyl-D-alanine + UDP-N-acetyl-alpha-D-glucosamine = di-trans,octa-cis-undecaprenyl diphospho-[N-acetyl-alpha-D-glucosaminyl-(1-&gt;4)]-N-acetyl-alpha-D-muramoyl-L-alanyl-D-glutamyl-meso-2,6-diaminopimeloyl-D-alanyl-D-alanine + UDP + H(+). The protein operates within cell wall biogenesis; peptidoglycan biosynthesis. Its function is as follows. Cell wall formation. Catalyzes the transfer of a GlcNAc subunit on undecaprenyl-pyrophosphoryl-MurNAc-pentapeptide (lipid intermediate I) to form undecaprenyl-pyrophosphoryl-MurNAc-(pentapeptide)GlcNAc (lipid intermediate II). This chain is UDP-N-acetylglucosamine--N-acetylmuramyl-(pentapeptide) pyrophosphoryl-undecaprenol N-acetylglucosamine transferase, found in Brucella anthropi (strain ATCC 49188 / DSM 6882 / CCUG 24695 / JCM 21032 / LMG 3331 / NBRC 15819 / NCTC 12168 / Alc 37) (Ochrobactrum anthropi).